The following is a 244-amino-acid chain: Flagellar L-ring protein (244 aa).

Residues 1–18 (MNMRVFIFLIFAAASVSA) form the signal peptide. Residue cysteine 19 is the site of N-palmitoyl cysteine attachment. Cysteine 19 carries the S-diacylglycerol cysteine lipid modification.

This sequence belongs to the FlgH family. In terms of assembly, the basal body constitutes a major portion of the flagellar organelle and consists of four rings (L,P,S, and M) mounted on a central rod.

The protein localises to the cell outer membrane. Its subcellular location is the bacterial flagellum basal body. Its function is as follows. Assembles around the rod to form the L-ring and probably protects the motor/basal body from shearing forces during rotation. This chain is Flagellar L-ring protein, found in Jannaschia sp. (strain CCS1).